The chain runs to 127 residues: Ribonuclease P protein component (127 aa).

Belongs to the RnpA family. In terms of assembly, consists of a catalytic RNA component (M1 or rnpB) and a protein subunit.

The enzyme catalyses Endonucleolytic cleavage of RNA, removing 5'-extranucleotides from tRNA precursor.. Functionally, RNaseP catalyzes the removal of the 5'-leader sequence from pre-tRNA to produce the mature 5'-terminus. It can also cleave other RNA substrates such as 4.5S RNA. The protein component plays an auxiliary but essential role in vivo by binding to the 5'-leader sequence and broadening the substrate specificity of the ribozyme. The sequence is that of Ribonuclease P protein component from Agrobacterium fabrum (strain C58 / ATCC 33970) (Agrobacterium tumefaciens (strain C58)).